The chain runs to 420 residues: Glutamate dehydrogenase (420 aa).

Lysine 105 is a catalytic residue. Glycine 220 to tyrosine 226 serves as a coordination point for NAD(+).

Belongs to the Glu/Leu/Phe/Val dehydrogenases family. Homohexamer.

The protein resides in the cytoplasm. The catalysed reaction is L-glutamate + NAD(+) + H2O = 2-oxoglutarate + NH4(+) + NADH + H(+). The enzyme catalyses L-glutamate + NADP(+) + H2O = 2-oxoglutarate + NH4(+) + NADPH + H(+). This chain is Glutamate dehydrogenase (gdhA), found in Pyrococcus horikoshii (strain ATCC 700860 / DSM 12428 / JCM 9974 / NBRC 100139 / OT-3).